Reading from the N-terminus, the 1202-residue chain is DNA-directed RNA polymerase subunit beta (1202 aa).

Belongs to the RNA polymerase beta chain family. In terms of assembly, the RNAP catalytic core consists of 2 alpha, 1 beta, 1 beta' and 1 omega subunit. When a sigma factor is associated with the core the holoenzyme is formed, which can initiate transcription.

It catalyses the reaction RNA(n) + a ribonucleoside 5'-triphosphate = RNA(n+1) + diphosphate. DNA-dependent RNA polymerase catalyzes the transcription of DNA into RNA using the four ribonucleoside triphosphates as substrates. The sequence is that of DNA-directed RNA polymerase subunit beta from Leuconostoc mesenteroides subsp. mesenteroides (strain ATCC 8293 / DSM 20343 / BCRC 11652 / CCM 1803 / JCM 6124 / NCDO 523 / NBRC 100496 / NCIMB 8023 / NCTC 12954 / NRRL B-1118 / 37Y).